Reading from the N-terminus, the 591-residue chain is Proteasome-associated ATPase (591 aa).

A coiled-coil region spans residues 8-77; that stretch reads DSVAAARELE…LREEVDRLGQ (70 aa). 278–283 provides a ligand contact to ATP; it reads GCGKTL. The docks into pockets in the proteasome alpha-ring stretch occupies residues 590–591; that stretch reads YL.

Belongs to the AAA ATPase family. As to quaternary structure, homohexamer. Assembles into a hexameric ring structure that caps the 20S proteasome core. Strongly interacts with the prokaryotic ubiquitin-like protein Pup through a hydrophobic interface; the interacting region of ARC lies in its N-terminal coiled-coil domain. There is one Pup binding site per ARC hexamer ring. Upon ATP-binding, the C-terminus of ARC interacts with the alpha-rings of the proteasome core, possibly by binding to the intersubunit pockets.

It participates in protein degradation; proteasomal Pup-dependent pathway. In terms of biological role, ATPase which is responsible for recognizing, binding, unfolding and translocation of pupylated proteins into the bacterial 20S proteasome core particle. May be essential for opening the gate of the 20S proteasome via an interaction with its C-terminus, thereby allowing substrate entry and access to the site of proteolysis. Thus, the C-termini of the proteasomal ATPase may function like a 'key in a lock' to induce gate opening and therefore regulate proteolysis. The protein is Proteasome-associated ATPase of Rhodococcus jostii (strain RHA1).